A 302-amino-acid chain; its full sequence is Endochitinase 4 (302 aa).

A signal peptide spans 1 to 18; the sequence is EFTALSLLFSLLLLTASA. The region spanning 19-60 is the Chitin-binding type-1 domain; sequence EQCGKQAGGARCAAGLCCSNFGWCGNTNDYCGPGKCQSQCPS. 4 disulfide bridges follow: C21/C36, C30/C42, C35/C49, and C54/C58. Residues 59-79 are disordered; it reads PSGPSPKPPTPGPGPSGGDIG. Residues 61 to 72 show a composition bias toward pro residues; it reads GPSPKPPTPGPG. Residue E144 is the Proton donor of the active site. C162 and C182 are oxidised to a cystine.

It belongs to the glycosyl hydrolase 19 family. Chitinase class I subfamily.

The protein localises to the vacuole. It carries out the reaction Random endo-hydrolysis of N-acetyl-beta-D-glucosaminide (1-&gt;4)-beta-linkages in chitin and chitodextrins.. Functionally, defense against chitin-containing fungal pathogens. In Solanum tuberosum (Potato), this protein is Endochitinase 4 (CHTB4).